Reading from the N-terminus, the 336-residue chain is Ferredoxin--NADP reductase (336 aa).

Residues threonine 18, glutamate 37, glutamine 45, tyrosine 50, valine 92, phenylalanine 127, aspartate 290, and serine 331 each coordinate FAD.

It belongs to the ferredoxin--NADP reductase type 2 family. In terms of assembly, homodimer. It depends on FAD as a cofactor.

The catalysed reaction is 2 reduced [2Fe-2S]-[ferredoxin] + NADP(+) + H(+) = 2 oxidized [2Fe-2S]-[ferredoxin] + NADPH. This Symbiobacterium thermophilum (strain DSM 24528 / JCM 14929 / IAM 14863 / T) protein is Ferredoxin--NADP reductase.